The primary structure comprises 539 residues: Probable glycerol kinase (539 aa).

Threonine 12 serves as a coordination point for substrate. Arginine 16 contacts ATP. Residues arginine 86, tyrosine 168, and aspartate 285 each contribute to the substrate site. ATP contacts are provided by residues threonine 307, glycine 352, and 453 to 457; that span reads GMAKN.

This sequence belongs to the FGGY kinase family.

The enzyme catalyses glycerol + ATP = sn-glycerol 3-phosphate + ADP + H(+). It participates in polyol metabolism; glycerol degradation via glycerol kinase pathway; sn-glycerol 3-phosphate from glycerol: step 1/1. This chain is Probable glycerol kinase (gk), found in Dictyostelium discoideum (Social amoeba).